The sequence spans 349 residues: UDP-3-O-acylglucosamine N-acyltransferase (349 aa).

His246 serves as the catalytic Proton acceptor.

It belongs to the transferase hexapeptide repeat family. LpxD subfamily. In terms of assembly, homotrimer.

It catalyses the reaction a UDP-3-O-[(3R)-3-hydroxyacyl]-alpha-D-glucosamine + a (3R)-hydroxyacyl-[ACP] = a UDP-2-N,3-O-bis[(3R)-3-hydroxyacyl]-alpha-D-glucosamine + holo-[ACP] + H(+). The protein operates within bacterial outer membrane biogenesis; LPS lipid A biosynthesis. Functionally, catalyzes the N-acylation of UDP-3-O-acylglucosamine using 3-hydroxyacyl-ACP as the acyl donor. Is involved in the biosynthesis of lipid A, a phosphorylated glycolipid that anchors the lipopolysaccharide to the outer membrane of the cell. The polypeptide is UDP-3-O-acylglucosamine N-acyltransferase (Trichormus variabilis (strain ATCC 29413 / PCC 7937) (Anabaena variabilis)).